Consider the following 306-residue polypeptide: UDP-3-O-acyl-N-acetylglucosamine deacetylase (306 aa).

Zn(2+) contacts are provided by His79, His238, and Asp242. Catalysis depends on His265, which acts as the Proton donor.

It belongs to the LpxC family. It depends on Zn(2+) as a cofactor.

The enzyme catalyses a UDP-3-O-[(3R)-3-hydroxyacyl]-N-acetyl-alpha-D-glucosamine + H2O = a UDP-3-O-[(3R)-3-hydroxyacyl]-alpha-D-glucosamine + acetate. The protein operates within glycolipid biosynthesis; lipid IV(A) biosynthesis; lipid IV(A) from (3R)-3-hydroxytetradecanoyl-[acyl-carrier-protein] and UDP-N-acetyl-alpha-D-glucosamine: step 2/6. Catalyzes the hydrolysis of UDP-3-O-myristoyl-N-acetylglucosamine to form UDP-3-O-myristoylglucosamine and acetate, the committed step in lipid A biosynthesis. The chain is UDP-3-O-acyl-N-acetylglucosamine deacetylase from Yersinia pseudotuberculosis serotype O:1b (strain IP 31758).